The chain runs to 565 residues: NAD-dependent malic enzyme (565 aa).

Residue Tyr-104 is the Proton donor of the active site. Arg-157 contacts NAD(+). Catalysis depends on Lys-175, which acts as the Proton acceptor. 3 residues coordinate a divalent metal cation: Glu-246, Asp-247, and Asp-270. Residues Asp-270 and Asn-418 each coordinate NAD(+).

This sequence belongs to the malic enzymes family. In terms of assembly, homotetramer. Mg(2+) is required as a cofactor. Requires Mn(2+) as cofactor.

The catalysed reaction is (S)-malate + NAD(+) = pyruvate + CO2 + NADH. It catalyses the reaction oxaloacetate + H(+) = pyruvate + CO2. The protein is NAD-dependent malic enzyme of Photorhabdus laumondii subsp. laumondii (strain DSM 15139 / CIP 105565 / TT01) (Photorhabdus luminescens subsp. laumondii).